The chain runs to 318 residues: Fe(3+) dicitrate transport system permease protein FecD (318 aa).

Residues 1–2 (MK) are Cytoplasmic-facing. Residues 3–23 (IALVIFITLALAGCALLSLHM) form a helical membrane-spanning segment. At 24 to 55 (GVIPVPWRALLTDWQAGHEHYYVLMEYRLPRL) the chain is on the periplasmic side. The chain crosses the membrane as a helical span at residues 56 to 76 (LLALFVGAALAVAGVLIQGIV). Residues 77-105 (RNPLASPDILGVNHAASLASVGALLLMPS) are Cytoplasmic-facing. A helical transmembrane segment spans residues 106–126 (LPVMVLPLLAFAGGMAGLILL). Residues 127–137 (KMLAKTHQPMK) lie on the Periplasmic side of the membrane. Residues 138 to 158 (LALTGVALSACWASLTDYLML) traverse the membrane as a helical segment. Residues 159 to 179 (SRPQDVNNALLWLTGSLWGRD) lie on the Cytoplasmic side of the membrane. A helical membrane pass occupies residues 180–200 (WSFVKIAIPLMILFLPLSLSF). Residues 201-225 (CRDLDLLALGDARATTLGVSVPHTR) lie on the Periplasmic side of the membrane. Residues 226–246 (FWALLLAVAMTSTGVAACGPI) form a helical membrane-spanning segment. At 247-269 (SFIGLVVPHMMRSITGGRHRRLL) the chain is on the cytoplasmic side. Residues 270 to 290 (PVSALTGALLLVVADLLARII) traverse the membrane as a helical segment. Residues 291-294 (HPPL) lie on the Periplasmic side of the membrane. Residues 295–315 (ELPVGVLTAIIGAPWFVWLLV) traverse the membrane as a helical segment. The Cytoplasmic segment spans residues 316–318 (RMR).

It belongs to the binding-protein-dependent transport system permease family. FecCD subfamily. In terms of assembly, the complex is composed of two ATP-binding proteins (FecE), two transmembrane proteins (FecC and FecD) and a solute-binding protein (FecB). Interacts with FecB.

It localises to the cell inner membrane. Part of the ABC transporter complex FecBCDE involved in citrate-dependent Fe(3+) uptake. Probably responsible for the translocation of the substrate across the membrane. This chain is Fe(3+) dicitrate transport system permease protein FecD, found in Escherichia coli (strain K12).